The primary structure comprises 747 residues: Pseudouridine-metabolizing bifunctional protein C1861.05 (747 aa).

A pseudouridine-5'-phosphate glycosidase region spans residues 1-379 (MLIVMNRGCR…KVSDKGVSSS (379 aa)). Residue glutamate 61 is the Proton donor; for PsiMP glycosidase activity of the active site. Residues lysine 123 and valine 143 each contribute to the substrate site. Mn(2+) is bound at residue aspartate 175. 177–179 (SAD) lines the substrate pocket. Lysine 196 functions as the Nucleophile; for PsiMP glycosidase activity in the catalytic mechanism. The pseudouridine kinase stretch occupies residues 380–747 (KKKITETTSK…VNPEIKTLLK (368 aa)).

In the N-terminal section; belongs to the pseudouridine-5'-phosphate glycosidase family. This sequence in the C-terminal section; belongs to the carbohydrate kinase PfkB family. Mn(2+) is required as a cofactor.

It localises to the cytoplasm. It catalyses the reaction D-ribose 5-phosphate + uracil = psi-UMP + H2O. The catalysed reaction is pseudouridine + ATP = psi-UMP + ADP + H(+). Bifunctional enzyme that catalyzes the phosphorylation of pseudouridine to pseudouridine 5'-phosphate (PsiMP), and the reversible cleavage of pseudouridine 5'-phosphate to ribose 5-phosphate and uracil. Is involved in a pseudouridine degradation pathway. This chain is Pseudouridine-metabolizing bifunctional protein C1861.05, found in Schizosaccharomyces pombe (strain 972 / ATCC 24843) (Fission yeast).